The following is an 88-amino-acid chain: DNA-directed RNA polymerase subunit omega (88 aa).

Belongs to the RNA polymerase subunit omega family. As to quaternary structure, the RNAP catalytic core consists of 2 alpha, 1 beta, 1 beta' and 1 omega subunit. When a sigma factor is associated with the core the holoenzyme is formed, which can initiate transcription.

It catalyses the reaction RNA(n) + a ribonucleoside 5'-triphosphate = RNA(n+1) + diphosphate. Its function is as follows. Promotes RNA polymerase assembly. Latches the N- and C-terminal regions of the beta' subunit thereby facilitating its interaction with the beta and alpha subunits. This is DNA-directed RNA polymerase subunit omega from Haemophilus influenzae (strain 86-028NP).